Consider the following 119-residue polypeptide: Large ribosomal subunit protein bL20 (119 aa).

Belongs to the bacterial ribosomal protein bL20 family.

Functionally, binds directly to 23S ribosomal RNA and is necessary for the in vitro assembly process of the 50S ribosomal subunit. It is not involved in the protein synthesizing functions of that subunit. The protein is Large ribosomal subunit protein bL20 of Streptococcus mutans serotype c (strain ATCC 700610 / UA159).